Reading from the N-terminus, the 317-residue chain is 4-hydroxy-3-methylbut-2-enyl diphosphate reductase (317 aa).

C12 is a [4Fe-4S] cluster binding site. (2E)-4-hydroxy-3-methylbut-2-enyl diphosphate contacts are provided by H43 and H81. Dimethylallyl diphosphate is bound by residues H43 and H81. Isopentenyl diphosphate is bound by residues H43 and H81. A [4Fe-4S] cluster-binding site is contributed by C103. H131 contributes to the (2E)-4-hydroxy-3-methylbut-2-enyl diphosphate binding site. A dimethylallyl diphosphate-binding site is contributed by H131. H131 is an isopentenyl diphosphate binding site. The active-site Proton donor is the E133. Residue T172 coordinates (2E)-4-hydroxy-3-methylbut-2-enyl diphosphate. C200 is a [4Fe-4S] cluster binding site. 3 residues coordinate (2E)-4-hydroxy-3-methylbut-2-enyl diphosphate: S228, N230, and S273. Dimethylallyl diphosphate-binding residues include S228, N230, and S273. Isopentenyl diphosphate is bound by residues S228, N230, and S273.

It belongs to the IspH family. [4Fe-4S] cluster serves as cofactor.

It carries out the reaction isopentenyl diphosphate + 2 oxidized [2Fe-2S]-[ferredoxin] + H2O = (2E)-4-hydroxy-3-methylbut-2-enyl diphosphate + 2 reduced [2Fe-2S]-[ferredoxin] + 2 H(+). It catalyses the reaction dimethylallyl diphosphate + 2 oxidized [2Fe-2S]-[ferredoxin] + H2O = (2E)-4-hydroxy-3-methylbut-2-enyl diphosphate + 2 reduced [2Fe-2S]-[ferredoxin] + 2 H(+). It participates in isoprenoid biosynthesis; dimethylallyl diphosphate biosynthesis; dimethylallyl diphosphate from (2E)-4-hydroxy-3-methylbutenyl diphosphate: step 1/1. Its pathway is isoprenoid biosynthesis; isopentenyl diphosphate biosynthesis via DXP pathway; isopentenyl diphosphate from 1-deoxy-D-xylulose 5-phosphate: step 6/6. Functionally, catalyzes the conversion of 1-hydroxy-2-methyl-2-(E)-butenyl 4-diphosphate (HMBPP) into a mixture of isopentenyl diphosphate (IPP) and dimethylallyl diphosphate (DMAPP). Acts in the terminal step of the DOXP/MEP pathway for isoprenoid precursor biosynthesis. The polypeptide is 4-hydroxy-3-methylbut-2-enyl diphosphate reductase (Exiguobacterium sp. (strain ATCC BAA-1283 / AT1b)).